A 626-amino-acid polypeptide reads, in one-letter code: Glyco-Gag protein (626 aa).

Residues 1 to 67 are Cytoplasmic-facing; the sequence is LGDVPGTSGA…VWSRSRAARP (67 aa). A helical transmembrane segment spans residues 68 to 86; that stretch reads VCCSIVLCCFCLTVFLYLS. At 87-626 the chain is on the extracellular side; it reads ENMGQTATTP…PQASLLTLDD (540 aa). Asparagine 113 carries an N-linked (GlcNAc...) asparagine; by host glycan. Pro residues-rich tracts occupy residues 199–212 and 249–261; these read PSAP…PLST and DPPP…PPSP. The disordered stretch occupies residues 199-306; it reads PSAPSLPPEP…STTSQAFPLR (108 aa). An N-linked (GlcNAc...) asparagine; by host glycan is attached at asparagine 480. 2 stretches are compositionally biased toward basic and acidic residues: residues 522 to 554 and 574 to 607; these read RETP…EKER and RQDR…DCPK. Residues 522 to 626 form a disordered region; the sequence is RETPEEREER…PQASLLTLDD (105 aa). The CCHC-type zinc-finger motif lies at 590–607; sequence DQCAYCKEKGHWARDCPK.

In terms of processing, glycosylated by host. Post-translationally, cleaved by host near the middle of the molecule, releasing the c-terminal half containing capsid and nucleoprotein domains op GAG.

Its subcellular location is the host cell membrane. Functionally, plays a role in viral particle release. Presumably acts by facilitating the fission of the virion bud at the cell surface. May prevent the antiviral activity of murine APOBEC3. This is Glyco-Gag protein from Mus musculus (Mouse).